The chain runs to 303 residues: Agmatinase (303 aa).

Residues H126, D149, H151, D153, D230, and D232 each contribute to the Mn(2+) site.

It belongs to the arginase family. Agmatinase subfamily. Mn(2+) serves as cofactor.

It catalyses the reaction agmatine + H2O = urea + putrescine. Catalyzes the formation of putrescine from agmatine. The polypeptide is Agmatinase (speB) (Blochmanniella floridana).